Reading from the N-terminus, the 57-residue chain is MSEYTVTGTFQARDGWQSFETEIEAPNENVAEEHTLAEFGSQHGLKRTQIEIEGVDA.

Belongs to the eukaryotic ribosomal protein eL20 family. In terms of assembly, part of the 50S ribosomal subunit. Binds 23S rRNA.

This Halorhabdus utahensis (strain DSM 12940 / JCM 11049 / AX-2) protein is Large ribosomal subunit protein eL20.